The chain runs to 195 residues: Pyruvoyl-dependent arginine decarboxylase AaxB (195 aa).

Serine 53 bears the Pyruvic acid (Ser) mark.

Belongs to the pyruvoyl-dependent arginine decarboxylase family. As to quaternary structure, trimer of an alpha-beta dimer. Requires pyruvate as cofactor.

Its subcellular location is the cytoplasm. It carries out the reaction L-arginine + H(+) = agmatine + CO2. Its function is as follows. Part of the AaxABC system, catalyzes the decarboxylation of L-arginine. The arginine uptake by the bacterium in the macrophage may be a virulence factor against the host innate immune response. The polypeptide is Pyruvoyl-dependent arginine decarboxylase AaxB (aaxB) (Chlamydia caviae (strain ATCC VR-813 / DSM 19441 / 03DC25 / GPIC) (Chlamydophila caviae)).